Consider the following 298-residue polypeptide: MTASTSSSYIGRFAPTPSGYLHFGSLVAALASYLDARAVGGRWLLRMEDLDPPREEPGAQAAILKALESYGFEWDGQMIRQSDRHDAYGEVLNRLFQQGLAYACTCSRKQLEPYHGIYPGLCRNLGHAQDDAAIRLRVPELEYRFVDRVQGEYRQHLGREVGDFVIRRRDGLYAYQLAVVLDDAWQGITDIVRGADLLDSTPRQLYLQELLGLSQPRYLHVPLITQPDGHKLGKSYRSPPLTEDQAPPLLLRALRALGQKPPADLDGASVAQIMAWGMAHWDAALIPRTLSVPEAQLS.

L-glutamate contacts are provided by residues 12–16 (RFAPT) and E48. The 'HIGH' region motif lies at 15-25 (PTPSGYLHFGS). Residues C104, C106, Y118, and C122 each coordinate Zn(2+). L-glutamate is bound by residues Y175 and R193. The 'KMSKS' region motif lies at 231-235 (KLGKS). K234 serves as a coordination point for ATP.

It belongs to the class-I aminoacyl-tRNA synthetase family. GluQ subfamily. The cofactor is Zn(2+).

Functionally, catalyzes the tRNA-independent activation of glutamate in presence of ATP and the subsequent transfer of glutamate onto a tRNA(Asp). Glutamate is transferred on the 2-amino-5-(4,5-dihydroxy-2-cyclopenten-1-yl) moiety of the queuosine in the wobble position of the QUC anticodon. The sequence is that of Glutamyl-Q tRNA(Asp) synthetase from Pseudomonas fluorescens (strain ATCC BAA-477 / NRRL B-23932 / Pf-5).